Reading from the N-terminus, the 67-residue chain is Large ribosomal subunit protein bL28 (67 aa).

Belongs to the bacterial ribosomal protein bL28 family.

The polypeptide is Large ribosomal subunit protein bL28 (Nitratiruptor sp. (strain SB155-2)).